The primary structure comprises 1066 residues: Isoleucine--tRNA ligase (1066 aa).

The 'HIGH' region motif lies at 49–59 (PYVSGAIHLGT). The short motif at 625–629 (KMSKS) is the 'KMSKS' region element. Lysine 628 provides a ligand contact to ATP.

This sequence belongs to the class-I aminoacyl-tRNA synthetase family. IleS type 2 subfamily. As to quaternary structure, monomer. Requires Zn(2+) as cofactor.

The protein resides in the cytoplasm. The enzyme catalyses tRNA(Ile) + L-isoleucine + ATP = L-isoleucyl-tRNA(Ile) + AMP + diphosphate. In terms of biological role, catalyzes the attachment of isoleucine to tRNA(Ile). As IleRS can inadvertently accommodate and process structurally similar amino acids such as valine, to avoid such errors it has two additional distinct tRNA(Ile)-dependent editing activities. One activity is designated as 'pretransfer' editing and involves the hydrolysis of activated Val-AMP. The other activity is designated 'posttransfer' editing and involves deacylation of mischarged Val-tRNA(Ile). The protein is Isoleucine--tRNA ligase of Pyrococcus horikoshii (strain ATCC 700860 / DSM 12428 / JCM 9974 / NBRC 100139 / OT-3).